Consider the following 259-residue polypeptide: Deoxyribose-phosphate aldolase (259 aa).

The active-site Proton donor/acceptor is the D102. The active-site Schiff-base intermediate with acetaldehyde is the K167. K201 functions as the Proton donor/acceptor in the catalytic mechanism.

It belongs to the DeoC/FbaB aldolase family. DeoC type 2 subfamily.

The protein resides in the cytoplasm. The catalysed reaction is 2-deoxy-D-ribose 5-phosphate = D-glyceraldehyde 3-phosphate + acetaldehyde. It participates in carbohydrate degradation; 2-deoxy-D-ribose 1-phosphate degradation; D-glyceraldehyde 3-phosphate and acetaldehyde from 2-deoxy-alpha-D-ribose 1-phosphate: step 2/2. Its function is as follows. Catalyzes a reversible aldol reaction between acetaldehyde and D-glyceraldehyde 3-phosphate to generate 2-deoxy-D-ribose 5-phosphate. The polypeptide is Deoxyribose-phosphate aldolase (Salmonella typhi).